We begin with the raw amino-acid sequence, 62 residues long: Photosystem II reaction center protein Z (62 aa).

2 helical membrane passes run 8 to 28 and 41 to 61; these read LVLLLITLSTILVVGVPVVLA and YTGAGLWTGLVIVTSLVNSLV.

It belongs to the PsbZ family. As to quaternary structure, PSII is composed of 1 copy each of membrane proteins PsbA, PsbB, PsbC, PsbD, PsbE, PsbF, PsbH, PsbI, PsbJ, PsbK, PsbL, PsbM, PsbT, PsbX, PsbY, PsbZ, Psb30/Ycf12, at least 3 peripheral proteins of the oxygen-evolving complex and a large number of cofactors. It forms dimeric complexes.

The protein localises to the plastid. Its subcellular location is the chloroplast thylakoid membrane. Functionally, may control the interaction of photosystem II (PSII) cores with the light-harvesting antenna, regulates electron flow through the 2 photosystem reaction centers. PSII is a light-driven water plastoquinone oxidoreductase, using light energy to abstract electrons from H(2)O, generating a proton gradient subsequently used for ATP formation. The chain is Photosystem II reaction center protein Z from Porphyra purpurea (Red seaweed).